A 468-amino-acid chain; its full sequence is UDP-N-acetylmuramoyl-L-alanine--L-glutamate ligase (468 aa).

Position 122-128 (122-128 (GTKGKST)) interacts with ATP.

The protein belongs to the MurCDEF family. MurD2 subfamily.

It is found in the cytoplasm. It catalyses the reaction UDP-N-acetyl-alpha-D-muramoyl-L-alanine + L-glutamate + ATP = UDP-N-acetyl-alpha-D-muramoyl-L-alanyl-L-glutamate + ADP + phosphate + H(+). It functions in the pathway cell wall biogenesis; peptidoglycan biosynthesis. In terms of biological role, cell wall formation. Catalyzes the addition of L-glutamate to the nucleotide precursor UDP-N-acetylmuramoyl-L-alanine. Has weak activity with D-glutamate. The protein is UDP-N-acetylmuramoyl-L-alanine--L-glutamate ligase of Xanthomonas oryzae pv. oryzae (strain MAFF 311018).